A 177-amino-acid chain; its full sequence is Coatomer subunit zeta-1 (177 aa).

Belongs to the adaptor complexes small subunit family. Oligomeric complex that consists of at least the alpha, beta, beta', gamma, delta, epsilon and zeta subunits.

The protein resides in the cytoplasm. It is found in the golgi apparatus membrane. It localises to the cytoplasmic vesicle. Its subcellular location is the COPI-coated vesicle membrane. The coatomer is a cytosolic protein complex that binds to dilysine motifs and reversibly associates with Golgi non-clathrin-coated vesicles, which further mediate biosynthetic protein transport from the ER, via the Golgi up to the trans Golgi network. Coatomer complex is required for budding from Golgi membranes, and is essential for the retrograde Golgi-to-ER transport of dilysine-tagged proteins. The zeta subunit may be involved in regulating the coat assembly and, hence, the rate of biosynthetic protein transport due to its association-dissociation properties with the coatomer complex. The chain is Coatomer subunit zeta-1 from Arabidopsis thaliana (Mouse-ear cress).